Here is a 108-residue protein sequence, read N- to C-terminus: UPF0145 protein Acel_2109 (108 aa).

It belongs to the UPF0145 family.

This chain is UPF0145 protein Acel_2109, found in Acidothermus cellulolyticus (strain ATCC 43068 / DSM 8971 / 11B).